We begin with the raw amino-acid sequence, 290 residues long: uncharacterized protein (290 aa).

The signal sequence occupies residues 1-25; that stretch reads MNKKSILSKTSLGSLFFLFGTALSA. Cys26 carries N-palmitoyl cysteine lipidation. A lipid anchor (S-diacylglycerol cysteine) is attached at Cys26. A disordered region spans residues 183 to 203; it reads GTDSKGSGSNNQNGGVTEKDF. The span at 186-197 shows a compositional bias: low complexity; sequence SKGSGSNNQNGG.

Belongs to the MG439/MG440 family.

The protein localises to the cell membrane. This is an uncharacterized protein from Mycoplasma pneumoniae (strain ATCC 29342 / M129 / Subtype 1) (Mycoplasmoides pneumoniae).